The primary structure comprises 65 residues: KEGYPMGRDGCKISCVINNNFCKVECQAKWRQSDGYCYFWGLSCYCTNLPEDAQVWDSSTNKCGG.

In terms of domain architecture, LCN-type CS-alpha/beta spans 1–64 (KEGYPMGRDG…VWDSSTNKCG (64 aa)). 4 disulfide bridges follow: cysteine 11/cysteine 63, cysteine 15/cysteine 37, cysteine 22/cysteine 44, and cysteine 26/cysteine 46.

The protein belongs to the long (4 C-C) scorpion toxin superfamily. Sodium channel inhibitor family. Beta subfamily. In terms of tissue distribution, expressed by the venom gland.

It is found in the secreted. Functionally, beta toxins bind voltage-independently at site-4 of sodium channels (Nav) and shift the voltage of activation toward more negative potentials thereby affecting sodium channel activation and promoting spontaneous and repetitive firing. The protein is Putative beta-neurotoxin RjAa2 of Rhopalurus junceus (Caribbean blue scorpion).